Here is a 142-residue protein sequence, read N- to C-terminus: Endoribonuclease YbeY (142 aa).

Residues histidine 107, histidine 111, and aspartate 117 each coordinate Zn(2+).

Belongs to the endoribonuclease YbeY family. Zn(2+) is required as a cofactor.

It is found in the cytoplasm. Its function is as follows. Single strand-specific metallo-endoribonuclease involved in late-stage 70S ribosome quality control and in maturation of the 3' terminus of the 16S rRNA. This Chlorobium phaeobacteroides (strain DSM 266 / SMG 266 / 2430) protein is Endoribonuclease YbeY.